A 473-amino-acid chain; its full sequence is GTPase Der (473 aa).

EngA-type G domains lie at 3-167 (FKVA…KGLE) and 203-378 (LRVA…TFWN). Residues 9-16 (GRPNVGKS), 56-60 (DTAGL), 119-122 (NKCE), 209-216 (GRPNVGKS), 256-260 (DTAGM), and 321-324 (NKWD) each bind GTP. Residues 379–463 (ARVPTARLNR…PIRLFMRKTH (85 aa)) enclose the KH-like domain.

This sequence belongs to the TRAFAC class TrmE-Era-EngA-EngB-Septin-like GTPase superfamily. EngA (Der) GTPase family. In terms of assembly, associates with the 50S ribosomal subunit.

In terms of biological role, GTPase that plays an essential role in the late steps of ribosome biogenesis. This is GTPase Der from Parvibaculum lavamentivorans (strain DS-1 / DSM 13023 / NCIMB 13966).